The primary structure comprises 211 residues: Protoglabretal synthase MOI1 (211 aa).

5 helical membrane-spanning segments follow: residues A16–I36, L50–F70, V104–Y124, I135–A155, and I179–C199. One can recognise an EXPERA domain in the interval I46–A188.

The protein belongs to the EBP family. As to expression, expressed in maturing fruits and in juice vesicles.

It is found in the membrane. It carries out the reaction 7,8-epoxymelianol = protoglabretal. It functions in the pathway secondary metabolite biosynthesis; terpenoid biosynthesis. Isomerase involved in the biosynthesis of glabretanes triterpene natural products such as glabretal, a component with in vitro antiproliferative properties on lymphocytes. Catalyzes the conversion of 7,8-epoxymelianol to protoglabretal via skeletal rearrangements. In Citrus sinensis (Sweet orange), this protein is Protoglabretal synthase MOI1.